The primary structure comprises 131 residues: D-ribose pyranase (131 aa).

H20 (proton donor) is an active-site residue. Substrate is bound by residues D28, H98, and 120-122; that span reads YSN.

The protein belongs to the RbsD / FucU family. RbsD subfamily. Homodecamer.

It localises to the cytoplasm. It carries out the reaction beta-D-ribopyranose = beta-D-ribofuranose. It participates in carbohydrate metabolism; D-ribose degradation; D-ribose 5-phosphate from beta-D-ribopyranose: step 1/2. Its function is as follows. Catalyzes the interconversion of beta-pyran and beta-furan forms of D-ribose. The sequence is that of D-ribose pyranase from Latilactobacillus sakei subsp. sakei (strain 23K) (Lactobacillus sakei subsp. sakei).